The following is a 171-amino-acid chain: 3-hydroxydecanoyl-[acyl-carrier-protein] dehydratase (171 aa).

H70 is an active-site residue.

The protein belongs to the thioester dehydratase family. FabA subfamily. In terms of assembly, homodimer.

The protein localises to the cytoplasm. It catalyses the reaction a (3R)-hydroxyacyl-[ACP] = a (2E)-enoyl-[ACP] + H2O. The catalysed reaction is (3R)-hydroxydecanoyl-[ACP] = (2E)-decenoyl-[ACP] + H2O. It carries out the reaction (2E)-decenoyl-[ACP] = (3Z)-decenoyl-[ACP]. The protein operates within lipid metabolism; fatty acid biosynthesis. Its function is as follows. Necessary for the introduction of cis unsaturation into fatty acids. Catalyzes the dehydration of (3R)-3-hydroxydecanoyl-ACP to E-(2)-decenoyl-ACP and then its isomerization to Z-(3)-decenoyl-ACP. Can catalyze the dehydratase reaction for beta-hydroxyacyl-ACPs with saturated chain lengths up to 16:0, being most active on intermediate chain length. The chain is 3-hydroxydecanoyl-[acyl-carrier-protein] dehydratase from Mesorhizobium japonicum (strain LMG 29417 / CECT 9101 / MAFF 303099) (Mesorhizobium loti (strain MAFF 303099)).